Reading from the N-terminus, the 474-residue chain is UDP-N-acetylmuramate--L-alanine ligase (474 aa).

108–114 lines the ATP pocket; sequence GTHGKTT.

This sequence belongs to the MurCDEF family.

It is found in the cytoplasm. The catalysed reaction is UDP-N-acetyl-alpha-D-muramate + L-alanine + ATP = UDP-N-acetyl-alpha-D-muramoyl-L-alanine + ADP + phosphate + H(+). Its pathway is cell wall biogenesis; peptidoglycan biosynthesis. Cell wall formation. This is UDP-N-acetylmuramate--L-alanine ligase from Chloroflexus aggregans (strain MD-66 / DSM 9485).